The following is a 194-amino-acid chain: Lysozyme g-like protein 1 (194 aa).

The N-terminal stretch at 1 to 19 is a signal peptide; that stretch reads MSALWLLLGLLALMDLSES. 2 cysteine pairs are disulfide-bonded: C24–C80 and C38–C49.

It belongs to the glycosyl hydrolase 23 family.

It localises to the secreted. This is Lysozyme g-like protein 1 (LYG1) from Homo sapiens (Human).